Here is a 554-residue protein sequence, read N- to C-terminus: Perforin-1 (554 aa).

A signal peptide spans 1–20; the sequence is MATCLFLLGLFLLLPRPVPA. Disulfide bonds link cysteine 22–cysteine 75, cysteine 30–cysteine 72, and cysteine 101–cysteine 175. The MACPF domain occupies 26–374; it reads TRSECKQKHK…HYIMSRARWQ (349 aa). A beta stranded membrane pass occupies residues 128-148; sequence WRVGLDVNPRPEANMRASVAG. A glycan (N-linked (GlcNAc...) asparagine) is linked at asparagine 204. 4 cysteine pairs are disulfide-bonded: cysteine 241–cysteine 407, cysteine 376–cysteine 392, cysteine 380–cysteine 394, and cysteine 396–cysteine 406. Residues 256–278 form a beta stranded membrane-spanning segment; the sequence is CLNVEAQVSIGAQASVSSEYKAC. Asparagine 375 carries N-linked (GlcNAc...) asparagine glycosylation. In terms of domain architecture, EGF-like spans 375-407; that stretch reads NCSRPCRSGQHKSSHDSCQCECQDSKVTNQDCC. Residues 395 to 513 enclose the C2 domain; the sequence is ECQDSKVTNQ…FHEVTCELNH (119 aa). Residues glycine 428, aspartate 429, threonine 432, alanine 433, aspartate 435, asparagine 454, glutamate 467, aspartate 483, alanine 484, aspartate 485, tryptophan 488, aspartate 489, aspartate 490, and aspartate 491 each coordinate Ca(2+). Disulfide bonds link cysteine 496–cysteine 509 and cysteine 524–cysteine 533. Asparagine 548 carries an N-linked (GlcNAc...) asparagine glycan.

This sequence belongs to the complement C6/C7/C8/C9 family. Monomer, as soluble protein. Homooligomer; homooligomerizes to form a pore-forming ring. The cofactor is Ca(2+). Post-translationally, N-glycosylated. The glycosylation sites are facing the interior of the pore. In terms of tissue distribution, detected in cytotoxic T-lymphocytes and natural killer cells.

The protein localises to the cytolytic granule. It localises to the secreted. Its subcellular location is the cell membrane. It is found in the endosome lumen. Its function is as follows. Pore-forming protein that plays a key role in granzyme-mediated programmed cell death, and in defense against virus-infected or neoplastic cells. Can insert into the membrane of target cells in its calcium-bound form, oligomerize and form large pores. Promotes cytolysis and apoptosis of target cells by mediating the passage and uptake of cytotoxic granzymes. Facilitates the delivery of cationic cargo protein, while anionic or neural proteins are not delivered efficiently. Perforin pores allow the release of mature caspase-7 (CASP7) into the extracellular milieu. The polypeptide is Perforin-1 (Prf1) (Mus musculus (Mouse)).